The chain runs to 232 residues: Putative N-acetylmannosamine-6-phosphate 2-epimerase (232 aa).

This sequence belongs to the NanE family.

It carries out the reaction an N-acyl-D-glucosamine 6-phosphate = an N-acyl-D-mannosamine 6-phosphate. The protein operates within amino-sugar metabolism; N-acetylneuraminate degradation; D-fructose 6-phosphate from N-acetylneuraminate: step 3/5. In terms of biological role, converts N-acetylmannosamine-6-phosphate (ManNAc-6-P) to N-acetylglucosamine-6-phosphate (GlcNAc-6-P). The chain is Putative N-acetylmannosamine-6-phosphate 2-epimerase from Corynebacterium glutamicum (strain R).